Consider the following 282-residue polypeptide: F-actin-capping protein subunit beta (282 aa).

Residues 73–103 form a disordered region; that stretch reads SPWSNQFDPPLDEAGSGGVGAGGNEGAGEGA. Gly residues predominate over residues 87–101; the sequence is GSGGVGAGGNEGAGE.

This sequence belongs to the F-actin-capping protein beta subunit family. As to quaternary structure, component of the F-actin capping complex, composed of a heterodimer of an alpha and a beta subunit.

It localises to the cytoplasm. The protein localises to the cytoskeleton. The protein resides in the actin patch. In terms of biological role, F-actin-capping proteins bind in a Ca(2+)-independent manner to the fast growing ends of actin filaments (barbed end) thereby blocking the exchange of subunits at these ends. Unlike other capping proteins (such as gelsolin and severin), these proteins do not sever actin filaments. The protein is F-actin-capping protein subunit beta (CAP2) of Gibberella zeae (strain ATCC MYA-4620 / CBS 123657 / FGSC 9075 / NRRL 31084 / PH-1) (Wheat head blight fungus).